Consider the following 660-residue polypeptide: Translation factor GUF1 homolog, mitochondrial (660 aa).

Residues 62–243 form the tr-type G domain; the sequence is EKIRNFSIIA…TIIEKIPPPT (182 aa). GTP is bound by residues 71-78, 136-140, and 190-193; these read AHIDHGKS, DTPGH, and NKID.

It belongs to the TRAFAC class translation factor GTPase superfamily. Classic translation factor GTPase family. LepA subfamily.

The protein localises to the mitochondrion inner membrane. The catalysed reaction is GTP + H2O = GDP + phosphate + H(+). Functionally, promotes mitochondrial protein synthesis. May act as a fidelity factor of the translation reaction, by catalyzing a one-codon backward translocation of tRNAs on improperly translocated ribosomes. Binds to mitochondrial ribosomes in a GTP-dependent manner. The sequence is that of Translation factor GUF1 homolog, mitochondrial from Trichoplax adhaerens (Trichoplax reptans).